Here is a 522-residue protein sequence, read N- to C-terminus: Lysine--tRNA ligase (522 aa).

The short motif at 44–52 (PSGLPHIGT) is the 'HIGH' region element. The 'KMSKS' region signature appears at 290–294 (KISKS). Lys-293 is a binding site for ATP.

The protein belongs to the class-I aminoacyl-tRNA synthetase family.

The protein localises to the cytoplasm. It carries out the reaction tRNA(Lys) + L-lysine + ATP = L-lysyl-tRNA(Lys) + AMP + diphosphate. This Rickettsia bellii (strain OSU 85-389) protein is Lysine--tRNA ligase.